Consider the following 2226-residue polypeptide: Histone-lysine N-methyltransferase ash1 (2226 aa).

Positions 1–145 (MSCSQNETAA…SDSEDDLPLK (145 aa)) are disordered. A compositionally biased stretch (polar residues) spans 32-52 (ITDQSSQSKSIKSATQFSVQR). Residues 99-111 (AVSKKVKVKRKKL) show a composition bias toward basic residues. Phosphoserine is present on residues Ser135, Ser136, and Ser138. 2 positions are modified to phosphothreonine: Thr200 and Thr201. The span at 260-269 (PRKRRGRPKK) shows a compositional bias: basic residues. 5 disordered regions span residues 260–324 (PRKR…IASS), 343–367 (RVLYPPPRSKRRQNNKKTACSSSNK), 673–695 (AQQLTLNGGGPASTLSKPLKRGL), 711–749 (SASASGTPNGSGSSNGNTKRRHKKSQSNDSSSPDDHKLP), and 811–832 (KRHLLEQPTSVSGAGSSASNSP). Residues 261–273 (RKRRGRPKKVVPT) constitute a DNA-binding region (a.T hook 1). Positions 294–306 (STTSTTQSTTPSP) are enriched in low complexity. Polar residues predominate over residues 307 to 324 (KMQNENAVPTGSLPIASS). Residues 711-727 (SASASGTPNGSGSSNGN) are compositionally biased toward low complexity. 3 positions are modified to phosphoserine: Ser740, Ser831, and Ser977. Positions 820–831 (SVSGAGSSASNS) are enriched in low complexity. 2 disordered regions span residues 980-1026 (QQTT…DCER) and 1049-1230 (SVVA…TTSL). Residues 989 to 999 (HEPEFDPDDEP) show a composition bias toward acidic residues. 2 consecutive DNA-binding regions (a.T hook) follow at residues 1065–1077 (GRPRGRKPKNREQ) and 1095–1107 (AKKRGRQPKQPVL). The segment covering 1108–1117 (EEPPPTPPPQ) has biased composition (pro residues). Residues 1186-1200 (AEAKRLDSIPTEHDP) show a composition bias toward basic and acidic residues. Over residues 1205–1219 (ESHNPGPQDYASCSE) the composition is skewed to polar residues. The AWS domain occupies 1339-1387 (FDHPTCNCKNQGEKSCLDNCLNRMVYTECSPSNCPAGEKCRNQKIQRHA). Residues 1390 to 1506 (PGVERFMTAD…EGEELTYDYN (117 aa)) form the SET domain. Residues 1514–1530 (EGQPCRCNTPQCRGVIG) form the Post-SET domain. 2 disordered regions span residues 1536-1575 (VKPLPAVEAKPSGEGLSGRNGRQRKQKAKKHAQRQAGKDI) and 1616-1648 (RASDAAATASSPALGTTNGDIPGRRPSTPSSPS). A compositionally biased stretch (basic residues) spans 1556-1568 (GRQRKQKAKKHAQ). 2 stretches are compositionally biased toward low complexity: residues 1619–1628 (DAAATASSPA) and 1639–1648 (RRPSTPSSPS). A Bromo domain is found at 1681 to 1789 (KMAVVLRDIC…DSYEQQKIAS (109 aa)). The tract at residues 1808-1839 (PKEVLSSEEEPGKIAVKKSPGAKERDSPIVPL) is disordered. Residues 1857 to 1903 (VIRCICGLYKDEGLMIQCSKCMVWQHTECTKADIDADNYQCERCEPR) form a PHD-type zinc finger. In terms of domain architecture, BAH spans 1952–2072 (KVLPTKKHTY…KTARFFSKAK (121 aa)). Residues 2205–2226 (SGRGARQRKTQQSSSSSTANST) are disordered. Residues 2214–2226 (TQQSSSSSTANST) are compositionally biased toward low complexity.

Belongs to the class V-like SAM-binding methyltransferase superfamily. Histone-lysine methyltransferase family. SET2 subfamily. As to quaternary structure, component of a large multiprotein complex distinct from complexes containing ash2 or brm. Interacts (via SET domain) with trx (via SET domain). Interacts with nej/cbp. Expressed throughout development but is present at higher levels during the embryonic and pupal stages than during the larval stages. During the larval stages it accumulates primarily in imaginal disks.

It localises to the nucleus. The protein resides in the chromosome. It carries out the reaction L-lysyl(4)-[histone H3] + 3 S-adenosyl-L-methionine = N(6),N(6),N(6)-trimethyl-L-lysyl(4)-[histone H3] + 3 S-adenosyl-L-homocysteine + 3 H(+). Trithorax group (TrxG) protein that has histone methyltransferase activity. Specifically trimethylates 'Lys-4' of histone H3 (H3K4me3), a specific tag for epigenetic transcriptional activation. TrxG proteins are generally required to maintain the transcriptionally active state of homeotic genes throughout development. Does not act as a coactivator required for transcriptional activation, but specifically prevents inappropriate Polycomb Group (PcG) silencing of homeotic genes in cells in which they must stay transcriptionally active. The sequence is that of Histone-lysine N-methyltransferase ash1 (ash1) from Drosophila melanogaster (Fruit fly).